A 408-amino-acid chain; its full sequence is Putative glutamate--cysteine ligase 2 (408 aa).

It belongs to the glutamate--cysteine ligase type 2 family. YbdK subfamily.

The enzyme catalyses L-cysteine + L-glutamate + ATP = gamma-L-glutamyl-L-cysteine + ADP + phosphate + H(+). Its function is as follows. ATP-dependent carboxylate-amine ligase which exhibits weak glutamate--cysteine ligase activity. The protein is Putative glutamate--cysteine ligase 2 of Bradyrhizobium sp. (strain BTAi1 / ATCC BAA-1182).